The sequence spans 657 residues: Histidine ammonia-lyase (657 aa).

Positions 253-255 form a cross-link, 5-imidazolinone (Ala-Gly); it reads ASG. Ser-254 carries the 2,3-didehydroalanine (Ser) modification. Thr-396 is subject to Phosphothreonine. Ser-635 is modified (phosphoserine). Position 637 is a phosphothreonine (Thr-637). Ser-648 carries the post-translational modification Phosphoserine.

This sequence belongs to the PAL/histidase family. Post-translationally, contains an active site 4-methylidene-imidazol-5-one (MIO), which is formed autocatalytically by cyclization and dehydration of residues Ala-Ser-Gly. In terms of tissue distribution, liver and skin.

The catalysed reaction is L-histidine = trans-urocanate + NH4(+). It functions in the pathway amino-acid degradation; L-histidine degradation into L-glutamate; N-formimidoyl-L-glutamate from L-histidine: step 1/3. The sequence is that of Histidine ammonia-lyase (Hal) from Rattus norvegicus (Rat).